The sequence spans 89 residues: MSITAERRTALIGEYQTAATDTGSPEVQVALLSERITNLTEHLKTHAKDFHSRRGLLVMVGKRRGLLDYLKRKDQARYQTLIGRLGLRR.

This sequence belongs to the universal ribosomal protein uS15 family. Part of the 30S ribosomal subunit. Forms a bridge to the 50S subunit in the 70S ribosome, contacting the 23S rRNA.

One of the primary rRNA binding proteins, it binds directly to 16S rRNA where it helps nucleate assembly of the platform of the 30S subunit by binding and bridging several RNA helices of the 16S rRNA. Functionally, forms an intersubunit bridge (bridge B4) with the 23S rRNA of the 50S subunit in the ribosome. This is Small ribosomal subunit protein uS15 from Gluconacetobacter diazotrophicus (strain ATCC 49037 / DSM 5601 / CCUG 37298 / CIP 103539 / LMG 7603 / PAl5).